An 803-amino-acid chain; its full sequence is Palmitoyl thioesterase CPT1C (803 aa).

Over 1 to 52 (MAEAHQAVGFRPSLTSDGAEVELSAPVLQEIYLSGLRSWKRHLSRFWNDFLT) the chain is Cytoplasmic. Residues 53–75 (GVFPASPLSWLFLFSAIQLAWFL) form a helical membrane-spanning segment. The Lumenal portion of the chain corresponds to 76–103 (QLDPSLGLMEKIKELLPDWGGQHHGLRG). The chain crosses the membrane as a helical span at residues 104–126 (VLAAALFASCLWGALIFTLHVAL). The Cytoplasmic segment spans residues 127 to 803 (RLLLSYHGWL…SKASMTSTDF (677 aa)). Residue His470 is the Proton acceptor of the active site. Residue 552-564 (GKSFIRRCHLSSD) participates in CoA binding. (R)-carnitine is bound by residues Tyr586, Ser588, and Thr599. Positions 761–803 (LFQAGQHFKRRFRGSGKENSRHRCGFLSRQTGASKASMTSTDF) are required for interaction with GRIA1. The tract at residues 772 to 803 (FRGSGKENSRHRCGFLSRQTGASKASMTSTDF) is disordered. The segment covering 788–803 (SRQTGASKASMTSTDF) has biased composition (polar residues).

It belongs to the carnitine/choline acetyltransferase family. Peripherally associated with AMPAR complex. AMPAR complex consists of an inner core made of 4 pore-forming GluA/GRIA proteins (GRIA1, GRIA2, GRIA3 and GRIA4) and 4 major auxiliary subunits arranged in a twofold symmetry. One of the two pairs of distinct binding sites is occupied either by CNIH2, CNIH3 or CACNG2, CACNG3. The other harbors CACNG2, CACNG3, CACNG4, CACNG8 or GSG1L. This inner core of AMPAR complex is complemented by outer core constituents binding directly to the GluA/GRIA proteins at sites distinct from the interaction sites of the inner core constituents. Outer core constituents include at least PRRT1, PRRT2, CKAMP44/SHISA9, FRRS1L and NRN1. The proteins of the inner and outer core serve as a platform for other, more peripherally associated AMPAR constituents, including CPT1C. Alone or in combination, these auxiliary subunits control the gating and pharmacology of the AMPAR complex and profoundly impact their biogenesis and protein processing. Interacts with SACM1L; the interaction regulates SACM1L phosphatidylinositol-3-phosphatase activity and translocation to endoplasmic reticulum/trans Golgi network in a malonyl-CoA dependent manner. Interacts with ATL1. In terms of tissue distribution, expressed predominantly in brain and testis. Expressed in motor neurons.

The protein localises to the cell projection. It is found in the dendrite. The protein resides in the axon. It localises to the endoplasmic reticulum membrane. It catalyses the reaction S-hexadecanoyl-L-cysteinyl-[protein] + H2O = L-cysteinyl-[protein] + hexadecanoate + H(+). Functionally, palmitoyl thioesterase specifically expressed in the endoplasmic reticulum of neurons. Modulates the trafficking of the glutamate receptor, AMPAR, to plasma membrane through depalmitoylation of GRIA1. Also regulates AMPR trafficking through the regulation of SACM1L phosphatidylinositol-3-phosphatase activity by interaction in a malonyl-CoA dependent manner. Binds malonyl-CoA and couples malonyl-CoA to ceramide levels, necessary for proper spine maturation and contributing to systemic energy homeostasis and appetite control. Binds to palmitoyl-CoA, but does not have carnitine palmitoyltransferase 1 catalytic activity or at very low levels. The polypeptide is Palmitoyl thioesterase CPT1C (Homo sapiens (Human)).